The following is a 101-amino-acid chain: Urease subunit gamma (101 aa).

This sequence belongs to the urease gamma subunit family. In terms of assembly, heterotrimer of UreA (gamma), UreB (beta) and UreC (alpha) subunits. Three heterotrimers associate to form the active enzyme.

It is found in the cytoplasm. The enzyme catalyses urea + 2 H2O + H(+) = hydrogencarbonate + 2 NH4(+). Its pathway is nitrogen metabolism; urea degradation; CO(2) and NH(3) from urea (urease route): step 1/1. The sequence is that of Urease subunit gamma from Ureaplasma urealyticum (Ureaplasma urealyticum biotype 2).